A 378-amino-acid chain; its full sequence is tRNA-specific 2-thiouridylase MnmA (378 aa).

ATP is bound by residues 27–34 and Leu-53; that span reads AMSGGVDS. The active-site Nucleophile is the Cys-121. A disulfide bridge links Cys-121 with Cys-218. Gly-145 provides a ligand contact to ATP. Residues 168 to 170 are interaction with tRNA; that stretch reads RDQ. The active-site Cysteine persulfide intermediate is the Cys-218.

The protein belongs to the MnmA/TRMU family.

Its subcellular location is the cytoplasm. The enzyme catalyses S-sulfanyl-L-cysteinyl-[protein] + uridine(34) in tRNA + AH2 + ATP = 2-thiouridine(34) in tRNA + L-cysteinyl-[protein] + A + AMP + diphosphate + H(+). Functionally, catalyzes the 2-thiolation of uridine at the wobble position (U34) of tRNA, leading to the formation of s(2)U34. The protein is tRNA-specific 2-thiouridylase MnmA of Rhizorhabdus wittichii (strain DSM 6014 / CCUG 31198 / JCM 15750 / NBRC 105917 / EY 4224 / RW1) (Sphingomonas wittichii).